The primary structure comprises 248 residues: Sulfur carrier protein FdhD (248 aa).

The Cysteine persulfide intermediate role is filled by Cys-99. 232 to 237 (FVRGKR) contacts Mo-bis(molybdopterin guanine dinucleotide).

Belongs to the FdhD family.

Its subcellular location is the cytoplasm. In terms of biological role, required for formate dehydrogenase (FDH) activity. Acts as a sulfur carrier protein that transfers sulfur from IscS to the molybdenum cofactor prior to its insertion into FDH. This Methanothermobacter thermautotrophicus (strain ATCC 29096 / DSM 1053 / JCM 10044 / NBRC 100330 / Delta H) (Methanobacterium thermoautotrophicum) protein is Sulfur carrier protein FdhD.